A 1048-amino-acid polypeptide reads, in one-letter code: Putative helicase/primase complex protein (1048 aa).

A disordered region spans residues 1025-1048; the sequence is STKEESSPTREETSSIKEKTFTET.

Belongs to the asfivirus F1055L family.

May be involved in DNA replication. This is Putative helicase/primase complex protein from African swine fever virus (isolate Pig/Kenya/KEN-50/1950) (ASFV).